Reading from the N-terminus, the 349-residue chain is Dihydroorotate dehydrogenase (quinone) (349 aa).

Residues 59–63 (PGFDK) and T83 contribute to the FMN site. K63 lines the substrate pocket. Residue 108-112 (NRMGF) coordinates substrate. FMN is bound by residues N142 and N173. Substrate is bound at residue N173. Catalysis depends on S176, which acts as the Nucleophile. N178 contributes to the substrate binding site. FMN contacts are provided by K212 and S240. Substrate is bound at residue 241–242 (NT). FMN-binding positions include G262, G291, and 312–313 (YS).

It belongs to the dihydroorotate dehydrogenase family. Type 2 subfamily. Monomer. FMN serves as cofactor.

The protein localises to the cell membrane. The catalysed reaction is (S)-dihydroorotate + a quinone = orotate + a quinol. Its pathway is pyrimidine metabolism; UMP biosynthesis via de novo pathway; orotate from (S)-dihydroorotate (quinone route): step 1/1. Catalyzes the conversion of dihydroorotate to orotate with quinone as electron acceptor. This chain is Dihydroorotate dehydrogenase (quinone), found in Novosphingobium aromaticivorans (strain ATCC 700278 / DSM 12444 / CCUG 56034 / CIP 105152 / NBRC 16084 / F199).